The sequence spans 1025 residues: Multidrug resistance protein MdtC (1025 aa).

The next 12 helical transmembrane spans lie at 3–23 (FFALFIYRPVATILLSVAITL), 333–353 (EVEQTLIISVALVILVVFLFL), 360–380 (IIPAVAVPVSLIGTFAAMYLC), 387–407 (LSLMALTIATGFVVDDAIVVL), 431–451 (VGFTVLSMSLSLVAVFLPLLL), 463–483 (FAVTLSVAIGISLLVSLTLTP), 528–548 (LVGVVLLGTIALNIWLYISIP), 853–873 (VILIIAAIATVYIVLGILYES), 875–895 (VHPLTILSTLPSAGVGALLAL), 897–917 (LFNAPFSLIALIGIMLLIGIV), 953–973 (PIMMTTLAALFGALPLVLSGG), and 984–1004 (ITIVGGLVMSQLLTLYTTPVV).

It belongs to the resistance-nodulation-cell division (RND) (TC 2.A.6) family. MdtC subfamily. Part of a tripartite efflux system composed of MdtA, MdtB and MdtC. MdtC forms a heteromultimer with MdtB.

The protein localises to the cell inner membrane. In Shigella boydii serotype 4 (strain Sb227), this protein is Multidrug resistance protein MdtC.